Reading from the N-terminus, the 260-residue chain is Ribonuclease 3 (260 aa).

The RNase III domain occupies 16–145 (VQLLESRLGL…VFGAVFLTSG (130 aa)). Residue E58 coordinates Mg(2+). The active site involves D62. Positions 131 and 134 each coordinate Mg(2+). The active site involves E134. The 70-residue stretch at 172 to 241 (DYKTLLQEMA…AQATLEKLRE (70 aa)) folds into the DRBM domain. A disordered region spans residues 219-260 (ATGRSKKEAEQSAAQATLEKLREDAACPTSPPPGTPRHDTPA).

This sequence belongs to the ribonuclease III family. In terms of assembly, homodimer. It depends on Mg(2+) as a cofactor.

Its subcellular location is the cytoplasm. The enzyme catalyses Endonucleolytic cleavage to 5'-phosphomonoester.. Its function is as follows. Digests double-stranded RNA. Involved in the processing of primary rRNA transcript to yield the immediate precursors to the large and small rRNAs (23S and 16S). Processes some mRNAs, and tRNAs when they are encoded in the rRNA operon. Processes pre-crRNA and tracrRNA of type II CRISPR loci if present in the organism. The polypeptide is Ribonuclease 3 (Myxococcus xanthus (strain DK1622)).